The sequence spans 260 residues: Thiazole synthase (260 aa).

The active-site Schiff-base intermediate with DXP is Lys-96. Residues Gly-157, 184–185 (AG), and 206–207 (NT) contribute to the 1-deoxy-D-xylulose 5-phosphate site.

It belongs to the ThiG family. In terms of assembly, homotetramer. Forms heterodimers with either ThiH or ThiS.

The protein localises to the cytoplasm. The enzyme catalyses [ThiS sulfur-carrier protein]-C-terminal-Gly-aminoethanethioate + 2-iminoacetate + 1-deoxy-D-xylulose 5-phosphate = [ThiS sulfur-carrier protein]-C-terminal Gly-Gly + 2-[(2R,5Z)-2-carboxy-4-methylthiazol-5(2H)-ylidene]ethyl phosphate + 2 H2O + H(+). The protein operates within cofactor biosynthesis; thiamine diphosphate biosynthesis. Its function is as follows. Catalyzes the rearrangement of 1-deoxy-D-xylulose 5-phosphate (DXP) to produce the thiazole phosphate moiety of thiamine. Sulfur is provided by the thiocarboxylate moiety of the carrier protein ThiS. In vitro, sulfur can be provided by H(2)S. The chain is Thiazole synthase from Nitrobacter hamburgensis (strain DSM 10229 / NCIMB 13809 / X14).